The sequence spans 151 residues: Deoxyuridine 5'-triphosphate nucleotidohydrolase (151 aa).

Substrate-binding positions include 70-72 (RSG), Asn-83, 87-89 (LID), and Met-97.

Belongs to the dUTPase family. The cofactor is Mg(2+).

It carries out the reaction dUTP + H2O = dUMP + diphosphate + H(+). Its pathway is pyrimidine metabolism; dUMP biosynthesis; dUMP from dCTP (dUTP route): step 2/2. Its function is as follows. This enzyme is involved in nucleotide metabolism: it produces dUMP, the immediate precursor of thymidine nucleotides and it decreases the intracellular concentration of dUTP so that uracil cannot be incorporated into DNA. This Pseudomonas syringae pv. syringae (strain B728a) protein is Deoxyuridine 5'-triphosphate nucleotidohydrolase.